Here is a 339-residue protein sequence, read N- to C-terminus: MSQAMQPQRTSPSPDAAIAPARARGGVWQLINRSGIVMVFLVLFATLSLTVPDFLTPRNIQGLLLSVTLIGSIAVTMMFVLALGEVDLSVASIVAFSGVVASTLITATHSVVLGIAGGVLAGGAVGLVNGVLIARWRINSLIVTLAMMEVVRGLAFITSNGDAVMISEERFFDLGGGSFLGISYPIWSNIVGFVVFGFLLRKTVFGKNVLAVGGNGEAALLAGLPVMRIKITVFVLQGLVTGFAGVMLASRMSLGDPKTSVGLELGVISACVLGGVSLTGGVATISGVLVGVLIMGSVQDAMSLLNVPTFYQYLIRGGILLLAVLFDQYRRNQRRAMKI.

10 consecutive transmembrane segments (helical) span residues 35–55, 63–83, 88–108, 113–133, 138–158, 179–199, 204–224, 229–249, 275–295, and 306–326; these read GIVM…PDFL, LLLS…VLAL, LSVA…ITAT, LGIA…GVLI, INSL…AFIT, FLGI…FGFL, VFGK…LAGL, IKIT…VMLA, GVSL…VLIM, and NVPT…AVLF.

The protein belongs to the binding-protein-dependent transport system permease family. AraH/RbsC subfamily. The complex is composed of two ATP-binding proteins (AraG), two transmembrane proteins (AraH) and a solute-binding protein (AraF).

Its subcellular location is the cell inner membrane. Its function is as follows. Part of the ABC transporter complex AraFGH involved in L-arabinose import. Responsible for the translocation of the substrate across the membrane. In Azospirillum brasilense, this protein is L-arabinose ABC transporter permease protein AraH (araH).